Here is a 234-residue protein sequence, read N- to C-terminus: CKLF-like MARVEL transmembrane domain-containing protein 4 (234 aa).

Acidic residues predominate over residues 1–11 (MRSGEELDGFE). The interval 1–38 (MRSGEELDGFEGEASSTSMISGASSPYQPTTEPVSQRR) is disordered. Residues 15–25 (SSTSMISGASS) are compositionally biased toward low complexity. Residues 49 to 176 (YLRGALGRLK…NTFLAVQKWR (128 aa)) enclose the MARVEL domain. Transmembrane regions (helical) follow at residues 59–79 (VAQVILALIAFICIETIMACS), 85–105 (YFFEFVSCSAFVVTGVLLIMF), 123–143 (LVNTGLSAFLFFIASIVLAAL), and 151–171 (IAAVIFGFLATAAYAVNTFLA). Ser-194 carries the phosphoserine modification.

It belongs to the chemokine-like factor family. In terms of assembly, interacts with PD-L1/CD274 and CMTM6. As to expression, highly expressed in testis and prostate.

Its subcellular location is the membrane. Its function is as follows. Acts as a backup for CMTM6 to regulate plasma membrane expression of PD-L1/CD274, an immune inhibitory ligand critical for immune tolerance to self and antitumor immunity. May protect PD-L1/CD274 from being polyubiquitinated and targeted for degradation. This is CKLF-like MARVEL transmembrane domain-containing protein 4 from Homo sapiens (Human).